The chain runs to 283 residues: Pyridoxal kinase PdxY (283 aa).

Position 8 (S8) interacts with substrate. Positions 110 and 147 each coordinate ATP. D219 is a binding site for substrate.

This sequence belongs to the pyridoxine kinase family. PdxY subfamily. Homodimer. Mg(2+) is required as a cofactor.

The enzyme catalyses pyridoxal + ATP = pyridoxal 5'-phosphate + ADP + H(+). Its pathway is cofactor metabolism; pyridoxal 5'-phosphate salvage; pyridoxal 5'-phosphate from pyridoxal: step 1/1. Pyridoxal kinase involved in the salvage pathway of pyridoxal 5'-phosphate (PLP). Catalyzes the phosphorylation of pyridoxal to PLP. The sequence is that of Pyridoxal kinase PdxY from Leifsonia xyli subsp. xyli (strain CTCB07).